A 563-amino-acid polypeptide reads, in one-letter code: Probable CoA ligase CCL11 (563 aa).

Residues 195 to 203 (TSGTTSSPK), 328 to 333 (HGYGMT), Asp426, 438 to 441 (IKDR), and Lys534 each bind ATP. The tract at residues 263–328 (DGEIIFNLIR…TESLGFVISH (66 aa)) is SBD1. Positions 329 to 405 (GYGMTEMLGV…LKGSSIMLGY (77 aa)) are SBD2.

The protein belongs to the ATP-dependent AMP-binding enzyme family.

It localises to the cytoplasm. It is found in the cytosol. This chain is Probable CoA ligase CCL11, found in Humulus lupulus (European hop).